Reading from the N-terminus, the 341-residue chain is 4-hydroxy-2-oxovalerate aldolase (341 aa).

The region spanning 9–259 is the Pyruvate carboxyltransferase domain; sequence VRITEVCLRD…KLDIDLYKMM (251 aa). 17–18 lines the substrate pocket; the sequence is RD. Residue D18 participates in Mn(2+) binding. The Proton acceptor role is filled by H21. 2 residues coordinate substrate: S171 and H198. Residues H198 and H200 each contribute to the Mn(2+) site. Y289 is a substrate binding site.

The protein belongs to the 4-hydroxy-2-oxovalerate aldolase family.

The catalysed reaction is (S)-4-hydroxy-2-oxopentanoate = acetaldehyde + pyruvate. The polypeptide is 4-hydroxy-2-oxovalerate aldolase (Bacillus thuringiensis (strain Al Hakam)).